The sequence spans 462 residues: UDP-N-acetylmuramoylalanine--D-glutamate ligase (462 aa).

118-124 is a binding site for ATP; it reads GTNGKST.

This sequence belongs to the MurCDEF family.

It is found in the cytoplasm. The enzyme catalyses UDP-N-acetyl-alpha-D-muramoyl-L-alanine + D-glutamate + ATP = UDP-N-acetyl-alpha-D-muramoyl-L-alanyl-D-glutamate + ADP + phosphate + H(+). It functions in the pathway cell wall biogenesis; peptidoglycan biosynthesis. Cell wall formation. Catalyzes the addition of glutamate to the nucleotide precursor UDP-N-acetylmuramoyl-L-alanine (UMA). The sequence is that of UDP-N-acetylmuramoylalanine--D-glutamate ligase from Anaeromyxobacter dehalogenans (strain 2CP-C).